Consider the following 514-residue polypeptide: Maturase K (514 aa).

It belongs to the intron maturase 2 family. MatK subfamily.

Its subcellular location is the plastid. It localises to the chloroplast. In terms of biological role, usually encoded in the trnK tRNA gene intron. Probably assists in splicing its own and other chloroplast group II introns. This is Maturase K from Acer palmatum (Japanese maple).